The primary structure comprises 55 residues: U17-myrmicitoxin-Mri1b (55 aa).

Positions Met-1–Ser-31 are cleaved as a signal peptide. Gln-32 carries the post-translational modification Pyrrolidone carboxylic acid.

In terms of processing, contains 1 disulfide bond. In terms of tissue distribution, expressed by the venom gland.

It is found in the secreted. The polypeptide is U17-myrmicitoxin-Mri1b (Manica rubida (European giant red ant)).